The following is a 118-amino-acid chain: MISKPDKNKTRQRRHARVRGKISGTAERPRLNVYRSNKNIYAQVIDDVEGVTLASASTLDSEVKGNNKTEKAASVGEVVAKRAAEKKIVDVVFDRGGYLYHGRVQALAEAARENGLKF.

The tract at residues 1–24 (MISKPDKNKTRQRRHARVRGKISG) is disordered. The span at 10 to 20 (TRQRRHARVRG) shows a compositional bias: basic residues.

This sequence belongs to the universal ribosomal protein uL18 family. As to quaternary structure, part of the 50S ribosomal subunit; part of the 5S rRNA/L5/L18/L25 subcomplex. Contacts the 5S and 23S rRNAs.

In terms of biological role, this is one of the proteins that bind and probably mediate the attachment of the 5S RNA into the large ribosomal subunit, where it forms part of the central protuberance. In Lactiplantibacillus plantarum (strain ATCC BAA-793 / NCIMB 8826 / WCFS1) (Lactobacillus plantarum), this protein is Large ribosomal subunit protein uL18.